The following is a 385-amino-acid chain: Leucine aminopeptidase 1 (385 aa).

Positions 1–19 are cleaved as a signal peptide; that stretch reads MKFPNLLSLGVAASTTVLA. The propeptide occupies 20–87; that stretch reads AVPNQKPIGD…FPRTFAQTTV (68 aa). Asn177 is a glycosylation site (N-linked (GlcNAc...) asparagine). 4 residues coordinate Zn(2+): His185, Asp204, Glu243, and Asp270. A disulfide bond links Cys319 and Cys323. His352 contacts Zn(2+).

It belongs to the peptidase M28 family. M28E subfamily. Monomer. Zn(2+) is required as a cofactor.

It is found in the secreted. Functionally, extracellular aminopeptidase that allows assimilation of proteinaceous substrates. The chain is Leucine aminopeptidase 1 (LAP1) from Ajellomyces capsulatus (strain H88) (Darling's disease fungus).